Consider the following 232-residue polypeptide: Flagellar L-ring protein (232 aa).

The first 21 residues, 1 to 21, serve as a signal peptide directing secretion; the sequence is MQKNAAHTYAISSLLVLSLTG. The N-palmitoyl cysteine moiety is linked to residue cysteine 22. Cysteine 22 is lipidated: S-diacylglycerol cysteine.

It belongs to the FlgH family. As to quaternary structure, the basal body constitutes a major portion of the flagellar organelle and consists of four rings (L,P,S, and M) mounted on a central rod.

The protein resides in the cell outer membrane. Its subcellular location is the bacterial flagellum basal body. In terms of biological role, assembles around the rod to form the L-ring and probably protects the motor/basal body from shearing forces during rotation. This Shigella dysenteriae serotype 1 (strain Sd197) protein is Flagellar L-ring protein.